Consider the following 833-residue polypeptide: Kinesin-like protein KIFC3 (833 aa).

The disordered stretch occupies residues 19-74 (LWRVGRAPEPEPGMARPAPAPASPAARPFPHTGPGRLRTGRGKDTPVCGDEDSSAR). Positions 30–48 (PGMARPAPAPASPAARPFP) are enriched in low complexity. 2 coiled-coil regions span residues 102–362 (LTLQ…ENLA) and 395–432 (LLQE…LQLR). In terms of domain architecture, Kinesin motor spans 445–768 (NIRVIARVRP…LKFAERVRSV (324 aa)). Residue 528–535 (GQTGAGKT) participates in ATP binding. The tract at residues 786–833 (EHLEWEPACQTPQPSARAHSAPSSGTSSRPGSIRRKLQPSGKSRPLPV) is disordered. A compositionally biased stretch (polar residues) spans 806-815 (APSSGTSSRP). 2 positions are modified to phosphoserine: S813 and S817.

Belongs to the TRAFAC class myosin-kinesin ATPase superfamily. Kinesin family.

It is found in the cell junction. Its subcellular location is the adherens junction. The protein localises to the cytoplasm. The protein resides in the cytoskeleton. It localises to the microtubule organizing center. It is found in the centrosome. Its subcellular location is the cytoplasmic vesicle membrane. Its function is as follows. Minus-end microtubule-dependent motor protein. Involved in apically targeted transport. Required for zonula adherens maintenance. The sequence is that of Kinesin-like protein KIFC3 (KIFC3) from Homo sapiens (Human).